The sequence spans 82 residues: Cytochrome b559 subunit alpha (82 aa).

The helical transmembrane segment at 22 to 36 threads the bilayer; it reads VIHAITLPSIFLAGF. Heme is bound at residue histidine 24.

This sequence belongs to the PsbE/PsbF family. Heterodimer of an alpha subunit and a beta subunit. PSII is composed of 1 copy each of membrane proteins PsbA, PsbB, PsbC, PsbD, PsbE, PsbF, PsbH, PsbI, PsbJ, PsbK, PsbL, PsbM, PsbT, PsbX, PsbY, PsbZ, Psb30/Ycf12, peripheral proteins PsbO, CyanoQ (PsbQ), PsbU, PsbV and a large number of cofactors. It forms dimeric complexes. The cofactor is heme b.

Its subcellular location is the cellular thylakoid membrane. Its function is as follows. This b-type cytochrome is tightly associated with the reaction center of photosystem II (PSII). PSII is a light-driven water:plastoquinone oxidoreductase that uses light energy to abstract electrons from H(2)O, generating O(2) and a proton gradient subsequently used for ATP formation. It consists of a core antenna complex that captures photons, and an electron transfer chain that converts photonic excitation into a charge separation. This is Cytochrome b559 subunit alpha from Synechococcus sp. (strain WH7803).